Here is a 66-residue protein sequence, read N- to C-terminus: Large ribosomal subunit protein uL29 (66 aa).

This sequence belongs to the universal ribosomal protein uL29 family.

This Caldanaerobacter subterraneus subsp. tengcongensis (strain DSM 15242 / JCM 11007 / NBRC 100824 / MB4) (Thermoanaerobacter tengcongensis) protein is Large ribosomal subunit protein uL29.